Consider the following 160-residue polypeptide: MRIVVIAVGRLKQGPERELAERYRERFDDLGRKLGFRGLDLHELPESRARDAATRISEEAAAIAALIPGRSVLVCLDERGQNIDSASLAAQIGRWRDEGVPAAVFVIGGADGLSPELRRRAKLGVAFGAATWPHQIVRVLLFEQIYRTATILAGHPYHRA.

S-adenosyl-L-methionine contacts are provided by leucine 76 and glycine 108.

Belongs to the RNA methyltransferase RlmH family. As to quaternary structure, homodimer.

The protein localises to the cytoplasm. The catalysed reaction is pseudouridine(1915) in 23S rRNA + S-adenosyl-L-methionine = N(3)-methylpseudouridine(1915) in 23S rRNA + S-adenosyl-L-homocysteine + H(+). Functionally, specifically methylates the pseudouridine at position 1915 (m3Psi1915) in 23S rRNA. The sequence is that of Ribosomal RNA large subunit methyltransferase H from Bradyrhizobium sp. (strain BTAi1 / ATCC BAA-1182).